A 181-amino-acid chain; its full sequence is uncharacterized protein (181 aa).

It to M.jannaschii MJ1106.

This is an uncharacterized protein from Methanothermobacter thermautotrophicus (strain ATCC 29096 / DSM 1053 / JCM 10044 / NBRC 100330 / Delta H) (Methanobacterium thermoautotrophicum).